A 65-amino-acid chain; its full sequence is Neurotoxin BmK AGAP-SYPU2 (65 aa).

The LCN-type CS-alpha/beta domain occupies 2 to 64 (KDGYIVDDKN…VPIRVPGRCN (63 aa)). Intrachain disulfides connect Cys12–Cys63, Cys16–Cys36, Cys22–Cys46, and Cys26–Cys48.

In terms of tissue distribution, expressed by the venom gland.

The protein localises to the secreted. In terms of biological role, alpha toxins bind voltage-independently at site-3 of sodium channels and inhibit the inactivation of the activated channels, thereby blocking neuronal transmission. In vivo, shows analgesic activity (ED(50) is 1.42 mg/kg) and antitumor activity against Ehrlich ascites tumor and S-180 fibrosarcoma models. The polypeptide is Neurotoxin BmK AGAP-SYPU2 (Olivierus martensii (Manchurian scorpion)).